The primary structure comprises 114 residues: Fumarate reductase subunit D (114 aa).

3 helical membrane passes run Val24 to Leu44, Leu50 to Pro70, and Gly92 to Ile112.

The protein belongs to the FrdD family. Part of an enzyme complex containing four subunits: a flavoprotein (FrdA), an iron-sulfur protein (FrdB), and two hydrophobic anchor proteins (FrdC and FrdD).

The protein localises to the cell inner membrane. Anchors the catalytic components of the fumarate reductase complex to the cell membrane, binds quinones. The sequence is that of Fumarate reductase subunit D from Haemophilus influenzae (strain ATCC 51907 / DSM 11121 / KW20 / Rd).